Here is a 156-residue protein sequence, read N- to C-terminus: MNVIEGVVATPNARVAIAIARFNNFINDSLLDGAIDALKRIGQVSDDNITVVWVPGAYELPLVANVLAKTNRYDAVIALGTVIRGGTAHFEYVAGEASSGLSSVAMNSDIPVAFGVLTTESIEQAIERAGTKAGNKGAEAALTALEMINVIKAIKG.

5-amino-6-(D-ribitylamino)uracil is bound by residues Phe-22, 57–59, and 81–83; these read AYE and TVI. 86-87 contacts (2S)-2-hydroxy-3-oxobutyl phosphate; sequence GT. His-89 acts as the Proton donor in catalysis. Phe-114 lines the 5-amino-6-(D-ribitylamino)uracil pocket. Arg-128 is a (2S)-2-hydroxy-3-oxobutyl phosphate binding site.

The protein belongs to the DMRL synthase family. As to quaternary structure, forms an icosahedral capsid composed of 60 subunits, arranged as a dodecamer of pentamers.

It carries out the reaction (2S)-2-hydroxy-3-oxobutyl phosphate + 5-amino-6-(D-ribitylamino)uracil = 6,7-dimethyl-8-(1-D-ribityl)lumazine + phosphate + 2 H2O + H(+). It functions in the pathway cofactor biosynthesis; riboflavin biosynthesis; riboflavin from 2-hydroxy-3-oxobutyl phosphate and 5-amino-6-(D-ribitylamino)uracil: step 1/2. Functionally, catalyzes the formation of 6,7-dimethyl-8-ribityllumazine by condensation of 5-amino-6-(D-ribitylamino)uracil with 3,4-dihydroxy-2-butanone 4-phosphate. This is the penultimate step in the biosynthesis of riboflavin. In Yersinia pseudotuberculosis serotype O:1b (strain IP 31758), this protein is 6,7-dimethyl-8-ribityllumazine synthase.